Reading from the N-terminus, the 469-residue chain is Mitochondrial adenyl nucleotide antiporter SLC25A25 (469 aa).

The segment at 1–165 is regulatory N-terminal domain; sequence MLCLCLYVPI…LYWKHSTIFD (165 aa). Topologically, residues 1-189 are mitochondrial intermembrane; the sequence is MLCLCLYVPI…ERQTGMWWRH (189 aa). EF-hand domains are found at residues 47–80, 78–113, and 114–149; these read TYRQWKQKIVQAGDKDLDGQLDFEEFVHYLQDHE, DHEKKLRLVFKSLDKKNDGRIDAQEIMQSLRDLGVK, and ISEQQAEKILKSMDKNGTMTIDWNEWRDYHLLHPVE. Asp-60, Asp-62, Asp-64, Gln-66, and Glu-71 together coordinate Ca(2+). Residues 151–160 form a linker region region; that stretch reads IPEIILYWKH. The segment at 166 to 469 is C-terminal transmembrane transporter domain; it reads VGENLTVPDE…LKITLGVQSR (304 aa). 3 Solcar repeats span residues 184–270, 278–363, and 375–463; these read GMWW…MKRL, LRIH…LKNT, and PGVF…LKIT. The chain crosses the membrane as a helical span at residues 190–207; it reads LVAGGGAGAVSRTCTAPL. At 208 to 244 the chain is on the mitochondrial matrix side; the sequence is DRLKVLMQVHASRSNNMCIIGGFTQMIREGGAKSLWR. The chain crosses the membrane as a helical span at residues 245 to 264; sequence GNGINVLKIAPESAIKFMAY. The Mitochondrial intermembrane segment spans residues 265 to 287; the sequence is EQMKRLVGSDQETLRIHERLVAG. The helical transmembrane segment at 288–301 threads the bilayer; the sequence is SLAGAIAQSSIYPM. The Mitochondrial matrix segment spans residues 302 to 337; the sequence is EVLKTRMALRKTGQYSGMLDCAKRILAKEGVAAFYK. Residues 338 to 357 form a helical membrane-spanning segment; it reads GYIPNMLGIIPYAGIDLAVY. Topologically, residues 358–380 are mitochondrial intermembrane; it reads ETLKNTWLQRYAVNSADPGVFVL. Residues 381 to 398 form a helical membrane-spanning segment; the sequence is LACGTISSTCGQLASYPL. At 399–437 the chain is on the mitochondrial matrix side; it reads ALVRTRMQAQASIEGAPEVTMSSLFKQILRTEGAFGLYR. Residues 438-457 traverse the membrane as a helical segment; the sequence is GLAPNFMKVIPAVSISYVVY. The Mitochondrial intermembrane portion of the chain corresponds to 458-469; it reads ENLKITLGVQSR.

Belongs to the mitochondrial carrier (TC 2.A.29) family. In terms of tissue distribution, mainly present in the liver and the skeletal muscle (at protein level).

The protein localises to the mitochondrion inner membrane. It catalyses the reaction Mg(2+)(out) + phosphate(in) + ATP(out) = Mg(2+)(in) + phosphate(out) + ATP(in). With respect to regulation, activated by an increase in cytosolic calcium levels that induce a conformational change of the N-terminal regulatory domain, uncapping the channel and allowing transport. Its function is as follows. Electroneutral antiporter that most probably mediates the transport of adenyl nucleotides through the inner mitochondrial membrane. Originally identified as an ATP-magnesium/inorganic phosphate antiporter, it could have a broader specificity for adenyl nucleotides. By regulating the mitochondrial matrix adenyl nucleotide pool could adapt to changing cellular energetic demands and indirectly regulate adenyl nucleotide-dependent metabolic pathways. The polypeptide is Mitochondrial adenyl nucleotide antiporter SLC25A25 (Rattus norvegicus (Rat)).